We begin with the raw amino-acid sequence, 149 residues long: MVFLSAPLWLRNRITDRYWRVQEVLKHARHFRGRKNRCYRLAVRAVTRAFVRCTRARSLKKRHLRTLWINRITAASQEHGLKYPAFILNLIKCQVELNRKVLADLAIYEPKTFKSLAALSKRRREEGFVAALGDGKEPEGIFSRVAQHH.

Residues Met1–Trp9 constitute a mitochondrion transit peptide.

This sequence belongs to the bacterial ribosomal protein bL20 family. As to quaternary structure, component of the mitochondrial ribosome large subunit (39S) which comprises a 16S rRNA and about 50 distinct proteins. Interacts with OXA1L.

The protein localises to the mitochondrion. This is Large ribosomal subunit protein bL20m (MRPL20) from Bos taurus (Bovine).